The primary structure comprises 1214 residues: Receptor-type guanylate cyclase gcy-19 (1214 aa).

An N-terminal signal peptide occupies residues methionine 1 to alanine 18. Over glutamine 19–alanine 517 the chain is Extracellular. Residues asparagine 85, asparagine 363, asparagine 441, and asparagine 464 are each glycosylated (N-linked (GlcNAc...) asparagine). A helical membrane pass occupies residues leucine 518 to phenylalanine 538. Topologically, residues tyrosine 539 to methionine 1214 are cytoplasmic. Residues arginine 572–asparagine 859 enclose the Protein kinase domain. Residues threonine 917–glutamate 1047 enclose the Guanylate cyclase domain. Positions asparagine 1116–glutamate 1197 are disordered. Positions aspartate 1133–serine 1142 are enriched in acidic residues. The span at leucine 1186–glutamate 1197 shows a compositional bias: basic and acidic residues.

Belongs to the adenylyl cyclase class-4/guanylyl cyclase family. In terms of tissue distribution, expressed asymmetrically in ASE right (ASER) sensory neuron.

Its subcellular location is the cell membrane. It catalyses the reaction GTP = 3',5'-cyclic GMP + diphosphate. Its function is as follows. Guanylate cyclase involved in the production of the second messenger cGMP. The sequence is that of Receptor-type guanylate cyclase gcy-19 from Caenorhabditis briggsae.